Consider the following 132-residue polypeptide: Small ribosomal subunit protein uS8 (132 aa).

This sequence belongs to the universal ribosomal protein uS8 family. In terms of assembly, part of the 30S ribosomal subunit. Contacts proteins S5 and S12.

In terms of biological role, one of the primary rRNA binding proteins, it binds directly to 16S rRNA central domain where it helps coordinate assembly of the platform of the 30S subunit. This is Small ribosomal subunit protein uS8 from Staphylococcus aureus (strain USA300).